A 773-amino-acid polypeptide reads, in one-letter code: Probable dipeptidyl peptidase 4 (773 aa).

Positions 1–18 (MKLSVLSVLLVSVAQAAA) are cleaved as a signal peptide. N-linked (GlcNAc...) asparagine glycosylation is found at Asn-37, Asn-80, Asn-112, Asn-220, Asn-471, and Asn-496. Ser-619 acts as the Charge relay system in catalysis. An N-linked (GlcNAc...) asparagine glycan is attached at Asn-671. Residues Asp-696 and His-731 each act as charge relay system in the active site.

Belongs to the peptidase S9B family.

The protein resides in the secreted. It catalyses the reaction Release of an N-terminal dipeptide, Xaa-Yaa-|-Zaa-, from a polypeptide, preferentially when Yaa is Pro, provided Zaa is neither Pro nor hydroxyproline.. In terms of biological role, extracellular dipeptidyl-peptidase which removes N-terminal dipeptides sequentially from polypeptides having unsubstituted N-termini provided that the penultimate residue is proline. This chain is Probable dipeptidyl peptidase 4 (dpp4), found in Emericella nidulans (strain FGSC A4 / ATCC 38163 / CBS 112.46 / NRRL 194 / M139) (Aspergillus nidulans).